The following is a 100-amino-acid chain: Cobalt transport protein CbiN (100 aa).

2 helical membrane-spanning segments follow: residues 8–28 and 69–89; these read LSNWLLIGGVIALAVLPLIFV and LLFSSQAALGAGIIGYAVGLY.

The protein belongs to the CbiN family. As to quaternary structure, forms an energy-coupling factor (ECF) transporter complex composed of an ATP-binding protein (A component, CbiO), a transmembrane protein (T component, CbiQ) and 2 possible substrate-capture proteins (S components, CbiM and CbiN) of unknown stoichimetry.

The protein resides in the cell inner membrane. The protein operates within cofactor biosynthesis; adenosylcobalamin biosynthesis. Its function is as follows. Part of the energy-coupling factor (ECF) transporter complex CbiMNOQ involved in cobalt import. In Nostoc sp. (strain PCC 7120 / SAG 25.82 / UTEX 2576), this protein is Cobalt transport protein CbiN.